Reading from the N-terminus, the 234-residue chain is Methylamine utilization ferredoxin-type protein MauM (234 aa).

4 consecutive 4Fe-4S ferredoxin-type domains span residues 61-91, 98-131, 140-176, and 184-215; these read ALAEKDFQSACVRCGLCVEDCPFDILKLASW, GTPFFTARDEPCRMCQDIPCVRACPTGALNPLLT, VAVLVDHETCLNYKGLNCSICVRVCPIRGEAISLKPI, and QIPTVDSTKCTGCGTCEKHCVLSEAAIRVLPR. [4Fe-4S] cluster-binding residues include cysteine 71, cysteine 74, cysteine 77, cysteine 81, cysteine 109, cysteine 112, cysteine 117, cysteine 121, cysteine 149, cysteine 157, cysteine 160, cysteine 164, cysteine 193, cysteine 196, cysteine 199, and cysteine 203.

It participates in one-carbon metabolism; methylamine degradation. Its function is as follows. Involved in electron transfer. This Methylobacillus flagellatus (strain ATCC 51484 / DSM 6875 / VKM B-1610 / KT) protein is Methylamine utilization ferredoxin-type protein MauM (mauM).